We begin with the raw amino-acid sequence, 1011 residues long: Ankyrin repeat domain-containing protein 18B (1011 aa).

ANK repeat units lie at residues 67–96 (KDRT…QINI), 100–129 (LNRT…NPNI), 133–162 (YGNT…NIEA), 166–195 (EGNT…NIHA), and 199–228 (FKRT…HISS). 2 disordered regions span residues 264–330 (LRND…GKKK) and 533–554 (MHPN…SEER). Coiled coils occupy residues 277 to 319 (ENLK…ENKQ), 385 to 639 (NEEM…ELVD), 692 to 722 (ISLL…CLEM), and 752 to 908 (FKKL…EAFA). A compositionally biased stretch (basic residues) spans 280–293 (KKRKKRKKLKKRKE). Residues 294 to 319 (GAKAEHNLKVASEEKQERLERSENKQ) show a composition bias toward basic and acidic residues.

In Homo sapiens (Human), this protein is Ankyrin repeat domain-containing protein 18B (ANKRD18B).